Here is a 189-residue protein sequence, read N- to C-terminus: dCTP deaminase (189 aa).

Residues 112–117, 136–138, glutamine 157, tyrosine 171, and glutamine 181 contribute to the dCTP site; these read KSTYAR and TLE. Glutamate 138 serves as the catalytic Proton donor/acceptor.

Belongs to the dCTP deaminase family. Homotrimer.

The catalysed reaction is dCTP + H2O + H(+) = dUTP + NH4(+). Its pathway is pyrimidine metabolism; dUMP biosynthesis; dUMP from dCTP (dUTP route): step 1/2. Functionally, catalyzes the deamination of dCTP to dUTP. In Burkholderia orbicola (strain MC0-3), this protein is dCTP deaminase.